Here is a 352-residue protein sequence, read N- to C-terminus: Putative F-box protein At5g14160 (352 aa).

The region spanning 14 to 60 is the F-box domain; it reads GVDWSELPEDVIRLVLRRLRLSDFHRARAVCSTWCRVWGDCVSKPNQ.

In Arabidopsis thaliana (Mouse-ear cress), this protein is Putative F-box protein At5g14160.